A 796-amino-acid chain; its full sequence is Exocyst complex component 3 (796 aa).

The stretch at 87-174 (PQLKEKLREL…GTNTEKEQML (88 aa)) forms a coiled coil.

This sequence belongs to the SEC6 family. In terms of assembly, the exocyst complex is composed of sec-3/exoc1, sec-5/exoc2, sec-6/exoc3, sec-8/exoc4, sec-10/exoc5, sec-15/exoc6, exo-70/exoc7 and exo-84/exoc8.

Component of the exocyst complex involved in the docking of exocytic vesicles with fusion sites on the plasma membrane. This Caenorhabditis elegans protein is Exocyst complex component 3 (sec-6).